The primary structure comprises 156 residues: Small ribosomal subunit protein uS7 (156 aa).

Belongs to the universal ribosomal protein uS7 family. As to quaternary structure, part of the 30S ribosomal subunit. Contacts proteins S9 and S11.

In terms of biological role, one of the primary rRNA binding proteins, it binds directly to 16S rRNA where it nucleates assembly of the head domain of the 30S subunit. Is located at the subunit interface close to the decoding center, probably blocks exit of the E-site tRNA. In Finegoldia magna (strain ATCC 29328 / DSM 20472 / WAL 2508) (Peptostreptococcus magnus), this protein is Small ribosomal subunit protein uS7.